The chain runs to 247 residues: Coproheme decarboxylase (247 aa).

Fe-coproporphyrin III is bound by residues R129, 143 to 147 (YPMDK), H170, Q183, and S221. Y143 is a catalytic residue.

It belongs to the ChdC family. Type 1 subfamily. It depends on Fe-coproporphyrin III as a cofactor.

The enzyme catalyses Fe-coproporphyrin III + 2 H2O2 + 2 H(+) = heme b + 2 CO2 + 4 H2O. The catalysed reaction is Fe-coproporphyrin III + H2O2 + H(+) = harderoheme III + CO2 + 2 H2O. It catalyses the reaction harderoheme III + H2O2 + H(+) = heme b + CO2 + 2 H2O. It functions in the pathway porphyrin-containing compound metabolism; protoheme biosynthesis. In terms of biological role, involved in coproporphyrin-dependent heme b biosynthesis. Catalyzes the decarboxylation of Fe-coproporphyrin III (coproheme) to heme b (protoheme IX), the last step of the pathway. The reaction occurs in a stepwise manner with a three-propionate intermediate. The polypeptide is Coproheme decarboxylase (Bacillus mycoides (strain KBAB4) (Bacillus weihenstephanensis)).